The following is a 536-amino-acid chain: Subtilisin-like proteinase Spm1 (536 aa).

Residues 1–15 (MKSVILLSLAACAVA) form the signal peptide. Residues 16 to 147 (APTAGVETIH…RYEEVKKDEC (132 aa)) constitute a propeptide that is removed on maturation. The 94-residue stretch at 44 to 137 (YIIKFKKHVD…IERDTIVHTM (94 aa)) folds into the Inhibitor I9 domain. Residues 156–462 (PWGLSRVSHR…GGCSNYFEIV (307 aa)) form the Peptidase S8 domain. Catalysis depends on charge relay system residues D192 and H224. N-linked (GlcNAc...) asparagine glycans are attached at residues N254 and N294. Catalysis depends on S390, which acts as the Charge relay system.

The protein belongs to the peptidase S8 family.

The protein resides in the vacuole. This chain is Subtilisin-like proteinase Spm1 (SPM1), found in Pyricularia oryzae (strain 70-15 / ATCC MYA-4617 / FGSC 8958) (Rice blast fungus).